Here is an 810-residue protein sequence, read N- to C-terminus: DNA ligase (810 aa).

Residues 46–50 (DAEYD), 95–96 (SL), and Glu-129 each bind NAD(+). Lys-131 acts as the N6-AMP-lysine intermediate in catalysis. 4 residues coordinate NAD(+): Arg-152, Glu-189, Lys-305, and Lys-329. Residues Cys-434, Cys-437, Cys-458, and Cys-464 each coordinate Zn(2+). A disordered region spans residues 528 to 548 (ERRAESGTAEPPKKAAKKKGD). In terms of domain architecture, BRCT spans 731–810 (AAASTFAGKT…DDWLAMVAQG (80 aa)).

Belongs to the NAD-dependent DNA ligase family. LigA subfamily. Requires Mg(2+) as cofactor. Mn(2+) is required as a cofactor.

It catalyses the reaction NAD(+) + (deoxyribonucleotide)n-3'-hydroxyl + 5'-phospho-(deoxyribonucleotide)m = (deoxyribonucleotide)n+m + AMP + beta-nicotinamide D-nucleotide.. Functionally, DNA ligase that catalyzes the formation of phosphodiester linkages between 5'-phosphoryl and 3'-hydroxyl groups in double-stranded DNA using NAD as a coenzyme and as the energy source for the reaction. It is essential for DNA replication and repair of damaged DNA. The chain is DNA ligase from Methylobacterium radiotolerans (strain ATCC 27329 / DSM 1819 / JCM 2831 / NBRC 15690 / NCIMB 10815 / 0-1).